We begin with the raw amino-acid sequence, 179 residues long: Large ribosomal subunit protein uL6 (179 aa).

It belongs to the universal ribosomal protein uL6 family. Part of the 50S ribosomal subunit.

In terms of biological role, this protein binds to the 23S rRNA, and is important in its secondary structure. It is located near the subunit interface in the base of the L7/L12 stalk, and near the tRNA binding site of the peptidyltransferase center. The chain is Large ribosomal subunit protein uL6 from Leptospira biflexa serovar Patoc (strain Patoc 1 / ATCC 23582 / Paris).